Reading from the N-terminus, the 373-residue chain is Carbamoyl phosphate synthase small chain (373 aa).

A CPSase region spans residues 1–179; it reads MSGKAQLVLE…AYIVEPEGPP (179 aa). Positions 47, 230, and 232 each coordinate L-glutamine. The 192-residue stretch at 182–373 folds into the Glutamine amidotransferase type-1 domain; the sequence is TVAALDLGIK…QFIELMEGDR (192 aa). C258 acts as the Nucleophile in catalysis. 5 residues coordinate L-glutamine: F259, Q262, N300, G302, and F303. Active-site residues include H348 and E350.

This sequence belongs to the CarA family. Composed of two chains; the small (or glutamine) chain promotes the hydrolysis of glutamine to ammonia, which is used by the large (or ammonia) chain to synthesize carbamoyl phosphate. Tetramer of heterodimers (alpha,beta)4.

The catalysed reaction is hydrogencarbonate + L-glutamine + 2 ATP + H2O = carbamoyl phosphate + L-glutamate + 2 ADP + phosphate + 2 H(+). It catalyses the reaction L-glutamine + H2O = L-glutamate + NH4(+). It functions in the pathway amino-acid biosynthesis; L-arginine biosynthesis; carbamoyl phosphate from bicarbonate: step 1/1. It participates in pyrimidine metabolism; UMP biosynthesis via de novo pathway; (S)-dihydroorotate from bicarbonate: step 1/3. Its function is as follows. Small subunit of the glutamine-dependent carbamoyl phosphate synthetase (CPSase). CPSase catalyzes the formation of carbamoyl phosphate from the ammonia moiety of glutamine, carbonate, and phosphate donated by ATP, constituting the first step of 2 biosynthetic pathways, one leading to arginine and/or urea and the other to pyrimidine nucleotides. The small subunit (glutamine amidotransferase) binds and cleaves glutamine to supply the large subunit with the substrate ammonia. This chain is Carbamoyl phosphate synthase small chain, found in Mycolicibacterium paratuberculosis (strain ATCC BAA-968 / K-10) (Mycobacterium paratuberculosis).